The sequence spans 264 residues: COP9 signalosome complex subunit 7b (264 aa).

Ala-2 is modified (N-acetylalanine). Residues 2 to 159 (AGEQKPSSNL…QLLEVDFCIG (158 aa)) form the PCI domain. Positions 194–237 (RANQYKENHHRTQQQVEAEVSNIKKTLKATASSSAQEMEQQLAE) form a coiled coil. A compositionally biased stretch (polar residues) spans 223 to 232 (TASSSAQEME). The segment at 223–264 (TASSSAQEMEQQLAERECPPHTEQRQPTKKMSKVKGLVSSRH) is disordered. The span at 235-248 (LAERECPPHTEQRQ) shows a compositional bias: basic and acidic residues.

It belongs to the CSN7/EIF3M family. CSN7 subfamily. Component of the CSN complex, composed of COPS1/GPS1, COPS2, COPS3, COPS4, COPS5, COPS6, COPS7 (COPS7A or COPS7B) and COPS8 and COPS9. In the complex, it probably interacts directly with COPS1, COPS2, COPS4, COPS5, COPS6 and COPS8. Interacts with EIF3S6.

The protein resides in the cytoplasm. It localises to the nucleus. In terms of biological role, component of the COP9 signalosome complex (CSN), a complex involved in various cellular and developmental processes. The CSN complex is an essential regulator of the ubiquitin (Ubl) conjugation pathway by mediating the deneddylation of the cullin subunits of SCF-type E3 ligase complexes, leading to decrease the Ubl ligase activity of SCF-type complexes such as SCF, CSA or DDB2. The complex is also involved in phosphorylation of p53/TP53, JUN, I-kappa-B-alpha/NFKBIA, ITPK1 and IRF8/ICSBP, possibly via its association with CK2 and PKD kinases. CSN-dependent phosphorylation of TP53 and JUN promotes and protects degradation by the Ubl system, respectively. The sequence is that of COP9 signalosome complex subunit 7b (Cops7b) from Mus musculus (Mouse).